Reading from the N-terminus, the 345-residue chain is Molybdopterin synthase catalytic subunit (345 aa).

Substrate-binding positions include 101 to 102 (HR), lysine 117, and 124 to 126 (KKE).

This sequence belongs to the MoaE family. MOCS2B subfamily. Heterotetramer; composed of 2 small (Mocs2A) and 2 large (Mocs2B) subunits.

The protein localises to the cytoplasm. The catalysed reaction is 2 [molybdopterin-synthase sulfur-carrier protein]-C-terminal-Gly-aminoethanethioate + cyclic pyranopterin phosphate + H2O = molybdopterin + 2 [molybdopterin-synthase sulfur-carrier protein]-C-terminal Gly-Gly + 2 H(+). It participates in cofactor biosynthesis; molybdopterin biosynthesis. In terms of biological role, catalytic subunit of the molybdopterin synthase complex, a complex that catalyzes the conversion of precursor Z into molybdopterin. Acts by mediating the incorporation of 2 sulfur atoms from thiocarboxylated Mocs2A into precursor Z to generate a dithiolene group. This chain is Molybdopterin synthase catalytic subunit, found in Drosophila virilis (Fruit fly).